The sequence spans 512 residues: Polyamine oxidase 1 (512 aa).

2 residues coordinate FAD: glutamate 38 and arginine 46. The disordered stretch occupies residues 448-470; that stretch reads DRMAEPLPRGPDAAADERPPSPR. Glutamate 476 provides a ligand contact to FAD.

Belongs to the flavin monoamine oxidase family. FAD is required as a cofactor.

It localises to the cytoplasm. It catalyses the reaction spermine + O2 + H2O = 3-aminopropanal + spermidine + H2O2. The enzyme catalyses N(1)-acetylspermine + O2 + H2O = 3-acetamidopropanal + spermidine + H2O2. The catalysed reaction is norspermine + O2 + H2O = norspermidine + 3-aminopropanal + H2O2. It carries out the reaction thermospermine + O2 + H2O = 3-aminopropanal + spermidine + H2O2. It participates in amine and polyamine degradation; spermine degradation. In terms of biological role, flavoenzyme involved in polyamine back-conversion. Catalyzes the oxidation of the secondary amino group of polyamines, such as spermine and its acetyl derivatives. Substrate preference is thermospermine &gt; spermine &gt; norspermine &gt; N(1)-acetylspermine. No activity detected when putrescine or spermidine are used as substrates. Plays an important role in the regulation of polyamine intracellular concentration. The protein is Polyamine oxidase 1 of Oryza sativa subsp. japonica (Rice).